Reading from the N-terminus, the 29-residue chain is Cytochrome b6-f complex subunit 8 (29 aa).

The helical transmembrane segment at 3–23 (IDVLGWVALLVVFTWSIAMVV) threads the bilayer.

Belongs to the PetN family. In terms of assembly, the 4 large subunits of the cytochrome b6-f complex are cytochrome b6, subunit IV (17 kDa polypeptide, PetD), cytochrome f and the Rieske protein, while the 4 small subunits are PetG, PetL, PetM and PetN. The complex functions as a dimer.

The protein resides in the cellular thylakoid membrane. Its function is as follows. Component of the cytochrome b6-f complex, which mediates electron transfer between photosystem II (PSII) and photosystem I (PSI), cyclic electron flow around PSI, and state transitions. The polypeptide is Cytochrome b6-f complex subunit 8 (Mastigocladus laminosus (Fischerella sp.)).